The primary structure comprises 284 residues: Signal peptidase I (284 aa).

A helical membrane pass occupies residues 4–22 (NFPLLLVIAVAVCGLLALL). Topologically, residues 23-58 (DLVFFAPRRRSAIASYQGSVSQPDAVVIEKLNKEPL) are cytoplasmic. Residues 59 to 77 (LVEYGKSFFPVLFIVLVLR) form a helical membrane-spanning segment. At 78 to 284 (SFLVEPFQIP…PNFSRVGLIK (207 aa)) the chain is on the periplasmic side. Active-site residues include Ser-90 and Lys-145.

The protein belongs to the peptidase S26 family.

The protein resides in the cell inner membrane. It catalyses the reaction Cleavage of hydrophobic, N-terminal signal or leader sequences from secreted and periplasmic proteins.. This is Signal peptidase I (lepB) from Pseudomonas fluorescens.